Reading from the N-terminus, the 246-residue chain is Orotidine 5'-phosphate decarboxylase (246 aa).

Substrate contacts are provided by residues Asp22, Lys44, 71–80, Thr131, Arg192, Gln201, Gly221, and Arg222; that span reads DLKFHDIPNT. The active-site Proton donor is Lys73.

This sequence belongs to the OMP decarboxylase family. Type 1 subfamily. In terms of assembly, homodimer.

The enzyme catalyses orotidine 5'-phosphate + H(+) = UMP + CO2. The protein operates within pyrimidine metabolism; UMP biosynthesis via de novo pathway; UMP from orotate: step 2/2. In terms of biological role, catalyzes the decarboxylation of orotidine 5'-monophosphate (OMP) to uridine 5'-monophosphate (UMP). This chain is Orotidine 5'-phosphate decarboxylase, found in Enterobacter sp. (strain 638).